The sequence spans 262 residues: Hemin import ATP-binding protein HmuV (262 aa).

Positions 1–247 (MRNLTLQRGR…ERIKQIFAFD (247 aa)) constitute an ABC transporter domain. 31–38 (GPNGTGKS) is a binding site for ATP.

The protein belongs to the ABC transporter superfamily. Heme (hemin) importer (TC 3.A.1.14.5) family. As to quaternary structure, the complex is composed of two ATP-binding proteins (HmuV), two transmembrane proteins (HmuU) and a solute-binding protein (HmuT).

Its subcellular location is the cell inner membrane. Its function is as follows. Part of the ABC transporter complex HmuTUV involved in hemin import. Responsible for energy coupling to the transport system. This chain is Hemin import ATP-binding protein HmuV, found in Plesiomonas shigelloides (Aeromonas shigelloides).